The primary structure comprises 362 residues: Mortality factor 4-like protein 1 (362 aa).

One can recognise a Tudor-knot domain in the interval Gln-12–Lys-51. The tract at residues Tyr-26–Lys-62 is interaction with KAT8. The interval Arg-113–Thr-182 is disordered. A sufficient for interaction with SIN3A region spans residues Pro-133–Val-266. A Nuclear localization signal motif is present at residues Lys-135–Glu-146. The residue at position 143 (Lys-143) is an N6-acetyllysine. The interval Ser-164–Asp-230 is interaction with RB1-1. The tract at residues Thr-188–Ala-342 is sufficient for interaction with PHF12. Residues Asn-191–Val-362 form the MRG domain. The tract at residues Leu-323–Leu-344 is interaction with RB1-2.

In terms of assembly, component of the NuA4 histone acetyltransferase complex which contains the catalytic subunit KAT5/TIP60 and the subunits EP400, TRRAP/PAF400, BRD8/SMAP, EPC1, DMAP1/DNMAP1, RUVBL1/TIP49, RUVBL2, ING3, actin, ACTL6A/BAF53A, MORF4L1/MRG15, MORF4L2/MRGX, MRGBP, YEATS4/GAS41, VPS72/YL1 and MEAF6. The NuA4 complex interacts with MYC and the adenovirus E1A protein. MORF4L1 may also participate in the formation of NuA4 related complexes which lack the KAT5/TIP60 catalytic subunit, but which include the SWI/SNF related protein SRCAP. Component of the mSin3A histone deacetylase complex, which includes SIN3A, HDAC2, ARID4B, MORF4L1, RBBP4/RbAp48, and RBBP7/RbAp46. May also interact with PHF12 and one or more as yet undefined members of the TLE (transducin-like enhancer of split) family of transcriptional repressors. Component of the SIN3B complex, which includes SIN3B, HDAC2 or HDAC1, PHF12 and MORF4L1. Interacts with RB1 and KAT8. Interacts with the N-terminus of MRFAP1. Found in a complex composed of MORF4L1, MRFAP1 and RB1. Interacts with the entire BRCA complex, which contains BRCA1, PALB2, BRCA2 and RAD51. Interacts with PALB2. Forms a complex with MSL1 and NUPR1.

It is found in the nucleus. Component of the NuA4 histone acetyltransferase (HAT) complex which is involved in transcriptional activation of select genes principally by acetylation of nucleosomal histones H4 and H2A. This modification may both alter nucleosome - DNA interactions and promote interaction of the modified histones with other proteins which positively regulate transcription. This complex may be required for the activation of transcriptional programs associated with oncogene and proto-oncogene mediated growth induction, tumor suppressor mediated growth arrest and replicative senescence, apoptosis, and DNA repair. The NuA4 complex ATPase and helicase activities seem to be, at least in part, contributed by the association of RUVBL1 and RUVBL2 with EP400. NuA4 may also play a direct role in DNA repair when directly recruited to sites of DNA damage. As part of the SIN3B complex represses transcription and counteracts the histone acetyltransferase activity of EP300 through the recognition H3K27ac marks by PHF12 and the activity of the histone deacetylase HDAC2. SIN3B complex is recruited downstream of the constitutively active genes transcriptional start sites through interaction with histones and mitigates histone acetylation and RNA polymerase II progression within transcribed regions contributing to the regulation of transcription. Required for homologous recombination repair (HRR) and resistance to mitomycin C (MMC). Involved in the localization of PALB2, BRCA2 and RAD51, but not BRCA1, to DNA-damage foci. The polypeptide is Mortality factor 4-like protein 1 (Homo sapiens (Human)).